The following is a 421-amino-acid chain: 4-hydroxy-3-methylbut-2-en-1-yl diphosphate synthase (flavodoxin) (421 aa).

Residues C298, C301, C344, and E351 each contribute to the [4Fe-4S] cluster site.

This sequence belongs to the IspG family. [4Fe-4S] cluster serves as cofactor.

The catalysed reaction is (2E)-4-hydroxy-3-methylbut-2-enyl diphosphate + oxidized [flavodoxin] + H2O + 2 H(+) = 2-C-methyl-D-erythritol 2,4-cyclic diphosphate + reduced [flavodoxin]. It functions in the pathway isoprenoid biosynthesis; isopentenyl diphosphate biosynthesis via DXP pathway; isopentenyl diphosphate from 1-deoxy-D-xylulose 5-phosphate: step 5/6. Converts 2C-methyl-D-erythritol 2,4-cyclodiphosphate (ME-2,4cPP) into 1-hydroxy-2-methyl-2-(E)-butenyl 4-diphosphate. This chain is 4-hydroxy-3-methylbut-2-en-1-yl diphosphate synthase (flavodoxin), found in Neisseria gonorrhoeae (strain ATCC 700825 / FA 1090).